The chain runs to 57 residues: Protein YnaL (57 aa).

A disordered region spans residues 7–57; that stretch reads LQIPVPEPIPGDPVPVPDPIPRPQPMPDPPPDEEPIKLSHRERRSARIRAC. Residues 11 to 35 show a composition bias toward pro residues; sequence VPEPIPGDPVPVPDPIPRPQPMPDP. Basic residues predominate over residues 46 to 57; it reads HRERRSARIRAC.

The protein is Protein YnaL of Escherichia coli (strain K12).